We begin with the raw amino-acid sequence, 1269 residues long: Regulator of nonsense transcripts 2 (1269 aa).

Disordered stretches follow at residues 1–125 (MPAE…EKEE) and 143–162 (LRSKNQNAPDNRPEENFFSR). A coiled-coil region spans residues 57 to 133 (KKRLEEDKRK…EESLQLHQEA (77 aa)). A sufficient for interaction with UPF1 region spans residues 94–132 (KKKQEEEERKKQEEQAKRQQEEAAAQLKEKEESLQLHQE). In terms of domain architecture, MIF4G 1 spans 168 to 396 (KKNTAFVKKL…KGELSEDRHK (229 aa)). Disordered stretches follow at residues 422 to 444 (NMPDLPQDKPTPEEHGPGIDIFT) and 487 to 518 (KSQNKDSNKDDSKEAKEPKDNKEASSPDDLEL). 2 stretches are compositionally biased toward basic and acidic residues: residues 427-438 (PQDKPTPEEHGP) and 487-511 (KSQNKDSNKDDSKEAKEPKDNKEAS). MIF4G domains follow at residues 571 to 755 (QQLP…YCNP) and 774 to 984 (RKLL…LRPK). The sufficient for interaction with UPF3A and UPF3B stretch occupies residues 709-926 (GRFLFRSPES…IRLVCTILDT (218 aa)). Positions 755–1269 (PPPAEKTVRK…LIFKTGGRRR (515 aa)) are sufficient for interaction with EIF4A1 and EIF1. The segment at 837–857 (EDVGIHVVDGVLEDIRLGMEV) is binds to UPF3B. The interval 1017 to 1090 (SKDSMTEGEN…KENETDEENA (74 aa)) is disordered. Residues 1025–1073 (ENLEEDEEEEEGGAETEEQSGNESEVNEPEEEEGSEEEEEGEEEEEENT) are compositionally biased toward acidic residues. The sufficient for interaction with UPF1 C-terminus stretch occupies residues 1081 to 1269 (KENETDEENA…LIFKTGGRRR (189 aa)). At threonine 1085 the chain carries Phosphothreonine. 2 interaction with UPF1 regions span residues 1102 to 1126 (VPCVEDEDFIQALDKMMLENLQQRS) and 1164 to 1204 (DTMP…AEQE). A necessary for interaction with UPF1 region spans residues 1102–1195 (VPCVEDEDFI…PMSSQLAANH (94 aa)). A disordered region spans residues 1218-1269 (ERQEQEDYQEMLQSLAQRPAPANTNRERRPRYQHPKGAPNADLIFKTGGRRR).

In terms of assembly, found in a post-splicing messenger ribonucleoprotein (mRNP) complex. Associates with the exon junction complex (EJC). Interacts with SMG1, EST1A, UPF3A, UPF3B, EIF4A1 and EIF1. Interacts with UPF1; interaction is promoted by TDRD6. Interacts with DDX4. Localized in male germ cells.

The protein resides in the cytoplasm. Its subcellular location is the perinuclear region. Its function is as follows. Involved in nonsense-mediated decay (NMD) of mRNAs containing premature stop codons by associating with the nuclear exon junction complex (EJC). Recruited by UPF3B associated with the EJC core at the cytoplasmic side of the nuclear envelope and the subsequent formation of an UPF1-UPF2-UPF3 surveillance complex (including UPF1 bound to release factors at the stalled ribosome) is believed to activate NMD. In cooperation with UPF3B stimulates both ATPase and RNA helicase activities of UPF1. Binds spliced mRNA. This chain is Regulator of nonsense transcripts 2, found in Mus musculus (Mouse).